A 93-amino-acid polypeptide reads, in one-letter code: Small ribosomal subunit protein bS16 (93 aa).

Belongs to the bacterial ribosomal protein bS16 family.

The polypeptide is Small ribosomal subunit protein bS16 (Opitutus terrae (strain DSM 11246 / JCM 15787 / PB90-1)).